A 488-amino-acid chain; its full sequence is Altronate oxidoreductase (488 aa).

18-29 (VIQFGEGNFLRA) lines the NAD(+) pocket.

Belongs to the mannitol dehydrogenase family. UxaB subfamily.

It carries out the reaction D-altronate + NAD(+) = keto-D-tagaturonate + NADH + H(+). Its pathway is carbohydrate metabolism; pentose and glucuronate interconversion. The polypeptide is Altronate oxidoreductase (Pectobacterium atrosepticum (strain SCRI 1043 / ATCC BAA-672) (Erwinia carotovora subsp. atroseptica)).